Consider the following 302-residue polypeptide: Pathogenicity locus probable regulatory protein HrpS (302 aa).

The Sigma-54 factor interaction domain maps to 9-237 (DDLDEERVPN…LKAAAKRHVL (229 aa)). ATP-binding positions include 37–44 (GETGTGKD) and 99–108 (AQGGTLYLDE). The segment at residues 279–298 (IDAASLELDMPRRTLYRRIK) is a DNA-binding region (H-T-H motif).

Member of the two-component regulatory system HrpR/HrpS that regulates the activation of the sigma factor hrpL which itself induces the expression of hprD as well as other hrp loci which are involved in plant pathogenicity, hrmA and avr genes. Probably interacts with sigma-54. The chain is Pathogenicity locus probable regulatory protein HrpS (hrpS) from Pseudomonas savastanoi pv. phaseolicola (Pseudomonas syringae pv. phaseolicola).